The following is a 204-amino-acid chain: Large ribosomal subunit protein uL4 (204 aa).

The disordered stretch occupies residues 52 to 76 (AEVRGGGKKPWAQKGGGRARAGSRR).

The protein belongs to the universal ribosomal protein uL4 family. Part of the 50S ribosomal subunit.

In terms of biological role, one of the primary rRNA binding proteins, this protein initially binds near the 5'-end of the 23S rRNA. It is important during the early stages of 50S assembly. It makes multiple contacts with different domains of the 23S rRNA in the assembled 50S subunit and ribosome. Forms part of the polypeptide exit tunnel. This is Large ribosomal subunit protein uL4 from Sulfurimonas denitrificans (strain ATCC 33889 / DSM 1251) (Thiomicrospira denitrificans (strain ATCC 33889 / DSM 1251)).